Reading from the N-terminus, the 263-residue chain is Ribosomal RNA small subunit methyltransferase A (263 aa).

I18, G43, E65, D91, and N110 together coordinate S-adenosyl-L-methionine.

The protein belongs to the class I-like SAM-binding methyltransferase superfamily. rRNA adenine N(6)-methyltransferase family. RsmA subfamily.

Its subcellular location is the cytoplasm. It catalyses the reaction adenosine(1518)/adenosine(1519) in 16S rRNA + 4 S-adenosyl-L-methionine = N(6)-dimethyladenosine(1518)/N(6)-dimethyladenosine(1519) in 16S rRNA + 4 S-adenosyl-L-homocysteine + 4 H(+). Specifically dimethylates two adjacent adenosines (A1518 and A1519) in the loop of a conserved hairpin near the 3'-end of 16S rRNA in the 30S particle. May play a critical role in biogenesis of 30S subunits. This Ehrlichia chaffeensis (strain ATCC CRL-10679 / Arkansas) protein is Ribosomal RNA small subunit methyltransferase A.